A 309-amino-acid polypeptide reads, in one-letter code: Methionine synthase (309 aa).

Residues His-201, Cys-203, Glu-224, and Cys-285 each contribute to the Zn(2+) site.

This sequence belongs to the archaeal MetE family. It depends on Zn(2+) as a cofactor.

The protein operates within amino-acid biosynthesis; L-methionine biosynthesis via de novo pathway. Is activated by phosphates. Functionally, catalyzes the transfer of a methyl group to L-homocysteine resulting in methionine formation. Can use methylcobalamin and methylcobinamide as methyl donors, but methylcobalamin is not considered to be the physiological substrate. It was proposed that, in vivo, a so-far-unidentified enzyme catalyzes methyltransfer from 5-methyltetrahydromethanopterin (5-CH3-H4MPT) to a corrinoid protein, and that the MetE gene product catalyzes the further transfer to L-homocysteine. Is not active with L-cysteine, coenzyme M, coenzyme B, glutathione or dithiothreitol as substrate. This chain is Methionine synthase, found in Methanothermobacter marburgensis (strain ATCC BAA-927 / DSM 2133 / JCM 14651 / NBRC 100331 / OCM 82 / Marburg) (Methanobacterium thermoautotrophicum).